The following is a 110-amino-acid chain: Protein YcgL (110 aa).

A YcgL domain is found at 14–98 (MFCVIYRSSK…PPEDLLKQHL (85 aa)). The tract at residues 87 to 110 (PPPPEDLLKQHLSSVGQNTSPADR) is disordered. Over residues 97 to 110 (HLSSVGQNTSPADR) the composition is skewed to polar residues.

This Salmonella choleraesuis (strain SC-B67) protein is Protein YcgL.